The chain runs to 293 residues: Histamine N-methyltransferase B (293 aa).

Position 28 (E28) interacts with substrate. S-adenosyl-L-methionine is bound by residues G60, E89, Q94, S120, and I142. N283 serves as a coordination point for substrate.

The protein belongs to the class I-like SAM-binding methyltransferase superfamily. HNMT family. As to quaternary structure, monomer.

Its subcellular location is the cytoplasm. It catalyses the reaction histamine + S-adenosyl-L-methionine = N(tau)-methylhistamine + S-adenosyl-L-homocysteine + H(+). In terms of biological role, inactivates histamine by N-methylation. Plays an important role in degrading histamine and in regulating the airway response to histamine. The protein is Histamine N-methyltransferase B (hnmt-b) of Xenopus laevis (African clawed frog).